Reading from the N-terminus, the 533-residue chain is Sterol 26-hydroxylase, mitochondrial (533 aa).

A mitochondrion-targeting transit peptide spans 1-32 (MAVLSRMRLRWALLDTRVMGHGLCPQGARAKA). The segment at 38-58 (LRDHESTEGPGTGQDRPRLRS) is disordered. 2 positions are modified to N6-acetyllysine: K142 and K375. A sterol-binding region spans residues 386–400 (PLLKAVIKETLRLYP). C479 contributes to the heme binding site. 2 positions are modified to N6-acetyllysine: K512 and K523.

This sequence belongs to the cytochrome P450 family. Interacts with HSP70; this interaction is required for initial targeting to mitochondria. Heme serves as cofactor. As to expression, expressed in liver, kidney and ovary.

The protein resides in the mitochondrion inner membrane. It carries out the reaction 5beta-cholestane-3alpha,7alpha,12alpha-triol + 6 reduced [adrenodoxin] + 3 O2 + 5 H(+) = (25R)-3alpha,7alpha,12alpha-trihydroxy-5beta-cholestan-26-oate + 6 oxidized [adrenodoxin] + 4 H2O. The catalysed reaction is cholestanol + 2 reduced [adrenodoxin] + O2 + 2 H(+) = (25R)-26-hydroxycholestanol + 2 oxidized [adrenodoxin] + H2O. The enzyme catalyses (25R)-3beta-hydroxycholest-5-en-7-one-26-al + 2 reduced [adrenodoxin] + O2 + H(+) = (25R)-3beta-hydroxycholest-5-en-7-one-26-oate + 2 oxidized [adrenodoxin] + H2O. It catalyses the reaction (25R)-3beta,26-dihydroxycholest-5-en-7-one + 2 reduced [adrenodoxin] + O2 + 2 H(+) = (25R)-3beta-hydroxycholest-5-en-7-one-26-al + 2 oxidized [adrenodoxin] + 2 H2O. It carries out the reaction 7-oxocholesterol + 2 reduced [adrenodoxin] + O2 + 2 H(+) = (25R)-3beta,26-dihydroxycholest-5-en-7-one + 2 oxidized [adrenodoxin] + H2O. The catalysed reaction is calciol + 2 reduced [adrenodoxin] + O2 + 2 H(+) = calcidiol + 2 oxidized [adrenodoxin] + H2O. The enzyme catalyses (25R)-5beta-cholestane-3alpha,7alpha,12alpha,26-tetrol + 2 reduced [adrenodoxin] + O2 + 2 H(+) = (25R)-3alpha,7alpha,12alpha-trihydroxy-5beta-cholestan-26-al + 2 oxidized [adrenodoxin] + 2 H2O. It catalyses the reaction 2 reduced [adrenodoxin] + cholesterol + O2 + 2 H(+) = (25R)-cholest-5-ene-3beta,26-diol + 2 oxidized [adrenodoxin] + H2O. It carries out the reaction (25R)-3beta,4beta-dihydroxycholest-5-en-26-al + 2 reduced [adrenodoxin] + O2 + H(+) = (25R)-3beta,4beta-dihydroxycholest-5-en-26-oate + 2 oxidized [adrenodoxin] + H2O. The catalysed reaction is (25R)-4beta,26-dihydroxycholesterol + 2 reduced [adrenodoxin] + O2 + 2 H(+) = (25R)-3beta,4beta-dihydroxycholest-5-en-26-al + 2 oxidized [adrenodoxin] + 2 H2O. The enzyme catalyses 4beta-hydroxycholesterol + 2 reduced [adrenodoxin] + O2 + 2 H(+) = (25R)-4beta,26-dihydroxycholesterol + 2 oxidized [adrenodoxin] + H2O. It catalyses the reaction (25R)-3beta-hydroxy-5-cholesten-26-al + 2 reduced [adrenodoxin] + O2 + H(+) = (25R)-3beta-hydroxy-5-cholestenoate + 2 oxidized [adrenodoxin] + H2O. It carries out the reaction (25R)-cholest-5-ene-3beta,26-diol + 2 reduced [adrenodoxin] + O2 + 2 H(+) = (25R)-3beta-hydroxy-5-cholesten-26-al + 2 oxidized [adrenodoxin] + 2 H2O. The catalysed reaction is (25R)-3alpha,7alpha,12alpha-trihydroxy-5beta-cholestan-26-al + 2 reduced [adrenodoxin] + O2 + H(+) = (25R)-3alpha,7alpha,12alpha-trihydroxy-5beta-cholestan-26-oate + 2 oxidized [adrenodoxin] + H2O. The enzyme catalyses 5beta-cholestane-3alpha,7alpha,12alpha-triol + 2 reduced [adrenodoxin] + O2 + 2 H(+) = (25R)-5beta-cholestane-3alpha,7alpha,12alpha,26-tetrol + 2 oxidized [adrenodoxin] + H2O. The protein operates within hormone biosynthesis; cholecalciferol biosynthesis. It participates in steroid metabolism; cholesterol degradation. It functions in the pathway lipid metabolism; bile acid biosynthesis. In terms of biological role, cytochrome P450 monooxygenase that catalyzes regio- and stereospecific hydroxylation of cholesterol and its derivatives. Hydroxylates (with R stereochemistry) the terminal methyl group of cholesterol side-chain in a three step reaction to yield at first a C26 alcohol, then a C26 aldehyde and finally a C26 acid. Regulates cholesterol homeostasis by catalyzing the conversion of excess cholesterol to bile acids via both the 'neutral' (classic) and the 'acid' (alternative) pathways. May also regulate cholesterol homeostasis via generation of active oxysterols, which act as ligands for NR1H2 and NR1H3 nuclear receptors, modulating the transcription of genes involved in lipid metabolism. Plays a role in cholestanol metabolism in the cerebellum. Similarly to cholesterol, hydroxylates cholestanol and may facilitate sterol diffusion through the blood-brain barrier to the systemic circulation for further degradation. Also hydroxylates retinal 7-ketocholesterol, a noxious oxysterol with pro-inflammatory and pro-apoptotic effects, and may play a role in its elimination from the retinal pigment epithelium. May play a redundant role in vitamin D biosynthesis. Catalyzes 25-hydroxylation of vitamin D3 that is required for its conversion to a functionally active form. In Rattus norvegicus (Rat), this protein is Sterol 26-hydroxylase, mitochondrial (Cyp27a1).